The chain runs to 212 residues: Peroxisomal membrane protein 4 (212 aa).

The next 2 membrane-spanning stretches (helical) occupy residues 97–117 (GGTH…LLFG) and 151–171 (LKWD…LWLF). Residue Asn-206 is glycosylated (N-linked (GlcNAc...) asparagine).

Belongs to the peroxisomal membrane protein PXMP2/4 family. Interacts with PEX19. As to expression, liver.

The protein resides in the peroxisome membrane. The protein is Peroxisomal membrane protein 4 (Pxmp4) of Rattus norvegicus (Rat).